The sequence spans 427 residues: Phosphomethylpyrimidine synthase (427 aa).

Residues N66, M95, Y124, H163, 185-187 (SRG), 226-229 (DGLR), and E265 contribute to the substrate site. H269 is a binding site for Zn(2+). Residue Y292 coordinates substrate. Residue H333 coordinates Zn(2+). [4Fe-4S] cluster-binding residues include C409, C412, and C416.

It belongs to the ThiC family. In terms of assembly, homodimer. Requires [4Fe-4S] cluster as cofactor.

The catalysed reaction is 5-amino-1-(5-phospho-beta-D-ribosyl)imidazole + S-adenosyl-L-methionine = 4-amino-2-methyl-5-(phosphooxymethyl)pyrimidine + CO + 5'-deoxyadenosine + formate + L-methionine + 3 H(+). The protein operates within cofactor biosynthesis; thiamine diphosphate biosynthesis. In terms of biological role, catalyzes the synthesis of the hydroxymethylpyrimidine phosphate (HMP-P) moiety of thiamine from aminoimidazole ribotide (AIR) in a radical S-adenosyl-L-methionine (SAM)-dependent reaction. The polypeptide is Phosphomethylpyrimidine synthase (Syntrophus aciditrophicus (strain SB)).